The following is a 324-amino-acid chain: Probable peptidylglycine alpha-hydroxylating monooxygenase 1 (324 aa).

Residues methionine 1–alanine 22 form the signal peptide. Disulfide bonds link cysteine 41–cysteine 85 and cysteine 73–cysteine 101. 2 residues coordinate Cu cation: histidine 66 and histidine 67. Position 142 (histidine 142) interacts with Cu cation. N-linked (GlcNAc...) asparagine glycosylation is present at asparagine 182. Cu cation-binding residues include histidine 207, histidine 209, and methionine 284. Cysteine 264 and cysteine 285 are disulfide-bonded.

It belongs to the copper type II ascorbate-dependent monooxygenase family. Cu(2+) is required as a cofactor.

It is found in the secreted. The enzyme catalyses a [peptide]-C-terminal glycine + 2 L-ascorbate + O2 = a [peptide]-C-terminal (2S)-2-hydroxyglycine + 2 monodehydro-L-ascorbate radical + H2O. Functionally, monooxygenase that catalyzes an essential reaction in C-terminal alpha-amidation of peptides. Produces an unstable peptidyl(2-hydroxyglycine) intermediate. C-terminal amidation of peptides such as neuropeptides is essential for full biological activity. This Caenorhabditis elegans protein is Probable peptidylglycine alpha-hydroxylating monooxygenase 1.